A 233-amino-acid polypeptide reads, in one-letter code: MADPSLNNPVVIQATRLDASILPRNVFSKSYLLYVIAQGTDVGAIAGKANEAGQGAYDAQVKNDEQDVELADHEARIKQLRIDVDDHESRITANTKAITALNVRVTTAEGEIASLQTNVSALDGRVTTAENNISALQADYVSKTATTSQSLASPLNVTTSYSVGGKKVLGARQTGWTAATGTANKGVFDADLTFAVSDTYTQSEIQAIANALITERRRTKALEDALRAHGLID.

Residues 2–60 (ADPSLNNPVVIQATRLDASILPRNVFSKSYLLYVIAQGTDVGAIAGKANEAGQGAYDAQ) form an interaction with tail hub protein gp10 region. 11 Trimerization heptad repeat repeats span residues 61-67 (VKNDEQD), 70-76 (LADHEAR), 77-83 (IKQLRID), 84-90 (VDDHESR), 91-97 (ITANTKA), 98-104 (ITALNVR), 105-111 (VTTAEGE), 112-118 (IASLQTN), 119-125 (VSALDGR), 126-132 (VTTAENN), and 133-139 (ISALQAD). Residues 61–139 (VKNDEQDVEL…ENNISALQAD (79 aa)) adopt a coiled-coil conformation. The tract at residues 175-233 (GWTAATGTANKGVFDADLTFAVSDTYTQSEIQAIANALITERRRTKALEDALRAHGLID) is inverted coiled coil. Positions 216–220 (RRRTK) match the Basic cluster motif.

This sequence belongs to the Lederbergvirus tail needle protein family. As to quaternary structure, homotrimer. The trimer forms an elongated coiled-coil (240A x 25A). The N-terminal tip may exist in a pre-ejection extended conformation, which may fold into a trimer of hairpins only after ejection into the host. Interacts (via N-terminus) with the tail hub gp10. Interacts with the head-to-tail adapter protein gp4.

It is found in the virion. Functionally, cell-perforating component and plug protein of the phage tail machine. Together with gp4 and gp10, gp26 is required for stabilization of the condensed DNA within the capsid by plugging the hole through which the DNA enters. Host cell membrane perforation allows viral DNA ejection. The needle penetrates the host outer membrane. The needle is released and the internal head protein gp7 is ejected to form an extra-cellular channel. In Salmonella typhimurium (Bacteriophage P22), this protein is Tail needle protein gp26 (26).